We begin with the raw amino-acid sequence, 375 residues long: MGELGEHRASLLSNPIPEVKTLGELKQGQNNGNLDLESEPFGSHWLQGSKATTGRTSEEPEEEIPPEEMAGEELPETSNLDGPLQQDLEVEVVEMSHLSITERTPSVSTAKGRKKRSRRLLELAKPKTNWQCLRDRTGRCCKGYAWISPRKTNLQFCLYWPSVYWTERFIEDTTLTITVPVVSQRMEELSRPKRFYQEYYNNNRTTPIWSIPRSTLEYQASNRLKQLATPKVRNNIWSINMSEVSQVSRAAQMAVPTPRTLRLAKPRPPATLLEEWDPMPKPKPYVSDYNRLLQLATPKALSEKCVPDRSPQWEVLDVTKNAVASSRIISLAQPKIRKDLNEGYNPYYISPASLVAQASPRIYELATPKYITKKV.

Positions 1–78 (MGELGEHRAS…MAGEELPETS (78 aa)) are disordered. The segment covering 59-75 (EPEEEIPPEEMAGEELP) has biased composition (acidic residues). THEG repeat units lie at residues 110-129 (AKGR…PKTN), 176-195 (TITV…PKRF), 214-233 (STLE…PKVR), 250-269 (AAQM…PRPP), 282-301 (PKPY…PKAL), 318-337 (VTKN…PKIR), and 352-371 (ASLV…PKYI). The residue at position 287 (Ser-287) is a Phosphoserine.

Interacts with CCT5. As to expression, testis specific (at protein level). Specifically expressed in spermatids; Sertoli cells maintain the level of expression in spermatids. If isolated spermatids are cultivated for 16 hours alone, the expression of THEG is down-regulated. May require signals from Sertoli cells to initiate changes in its gene expression through spermatogenesis.

The protein localises to the nucleus. Its function is as follows. May be involved (but not essential) in spermatogenesis. The sequence is that of Sperm microtubule associated protein 2 from Mus musculus (Mouse).